A 276-amino-acid polypeptide reads, in one-letter code: Dermonecrotic toxin LlSicTox-alphaIV2iv (276 aa).

His-5 is an active-site residue. Mg(2+)-binding residues include Glu-25 and Asp-27. Catalysis depends on His-41, which acts as the Nucleophile. Intrachain disulfides connect Cys-45–Cys-51 and Cys-47–Cys-193. Asp-85 is a binding site for Mg(2+).

Belongs to the arthropod phospholipase D family. Class II subfamily. The cofactor is Mg(2+). As to expression, expressed by the venom gland.

It is found in the secreted. It catalyses the reaction an N-(acyl)-sphingosylphosphocholine = an N-(acyl)-sphingosyl-1,3-cyclic phosphate + choline. It carries out the reaction an N-(acyl)-sphingosylphosphoethanolamine = an N-(acyl)-sphingosyl-1,3-cyclic phosphate + ethanolamine. The catalysed reaction is a 1-acyl-sn-glycero-3-phosphocholine = a 1-acyl-sn-glycero-2,3-cyclic phosphate + choline. The enzyme catalyses a 1-acyl-sn-glycero-3-phosphoethanolamine = a 1-acyl-sn-glycero-2,3-cyclic phosphate + ethanolamine. Dermonecrotic toxins cleave the phosphodiester linkage between the phosphate and headgroup of certain phospholipids (sphingolipid and lysolipid substrates), forming an alcohol (often choline) and a cyclic phosphate. This toxin acts on sphingomyelin (SM). It may also act on ceramide phosphoethanolamine (CPE), lysophosphatidylcholine (LPC) and lysophosphatidylethanolamine (LPE), but not on lysophosphatidylserine (LPS), and lysophosphatidylglycerol (LPG). It acts by transphosphatidylation, releasing exclusively cyclic phosphate products as second products. Induces dermonecrosis, hemolysis, increased vascular permeability, edema, inflammatory response, and platelet aggregation. In Loxosceles laeta (South American recluse spider), this protein is Dermonecrotic toxin LlSicTox-alphaIV2iv.